A 230-amino-acid polypeptide reads, in one-letter code: Cytidylate kinase (230 aa).

ATP is bound at residue 16–24 (GPASAGKST).

Belongs to the cytidylate kinase family. Type 1 subfamily.

It localises to the cytoplasm. The enzyme catalyses CMP + ATP = CDP + ADP. It catalyses the reaction dCMP + ATP = dCDP + ADP. This is Cytidylate kinase from Lactobacillus johnsonii (strain CNCM I-12250 / La1 / NCC 533).